A 76-amino-acid polypeptide reads, in one-letter code: uncharacterized protein (76 aa).

This is an uncharacterized protein from Ornithodoros (relapsing fever ticks).